Reading from the N-terminus, the 2346-residue chain is Acetyl-CoA carboxylase 1 (2346 aa).

An N-acetylmethionine modification is found at M1. A phosphoserine mark is found at S5, S23, S25, S29, S34, S48, S50, and S53. T58 bears the Phosphothreonine mark. Position 78 is a phosphoserine (S78). S80 bears the Phosphoserine; by AMPK mark. The region spanning 117–618 (VIEKVLIANN…GTGWLDRLIA (502 aa)) is the Biotin carboxylation domain. The ATP-grasp domain maps to 275–466 (SKRILNVPQE…LPAAQLQIAM (192 aa)). Residue 315–320 (GGGGKG) participates in ATP binding. Residues E424, E437, and N439 each coordinate Mg(2+). E424, E437, and N439 together coordinate Mn(2+). R441 is an active-site residue. A Phosphothreonine modification is found at T610. The region spanning 745–819 (FEKENDPSVL…DPGCVIAKMQ (75 aa)) is the Biotinyl-binding domain. Position 786 is an N6-biotinyllysine (K786). Phosphoserine occurs at positions 835, 1201, 1216, and 1218. Phosphothreonine is present on T1227. A phosphoserine mark is found at S1259, S1263, and S1273. K1334 carries the post-translational modification N6-acetyllysine. Positions 1576-1914 (PYVTKDQLQS…SVYSSVPLLN (339 aa)) constitute a CoA carboxyltransferase N-terminal domain. A carboxyltransferase region spans residues 1576 to 2234 (PYVTKDQLQS…EDLVKKKIHN (659 aa)). R1823, K2127, and R2129 together coordinate CoA. Residues 1918–2234 (PIDRVIEFVP…EDLVKKKIHN (317 aa)) enclose the CoA carboxyltransferase C-terminal domain. A Phosphothreonine modification is found at T2153.

Monomer, homodimer, and homotetramer. Can form filamentous polymers. Interacts in its inactive phosphorylated form with the BRCT domains of BRCA1 which prevents ACACA dephosphorylation and inhibits lipid synthesis. Interacts with MID1IP1; interaction with MID1IP1 promotes oligomerization and increases its activity. Mg(2+) is required as a cofactor. It depends on Mn(2+) as a cofactor. Requires biotin as cofactor. Phosphorylation on Ser-1263 is required for interaction with BRCA1. In terms of processing, phosphorylation at Ser-80 by AMPK inactivates enzyme activity. Post-translationally, the biotin cofactor is covalently attached to the central biotinyl-binding domain and is required for the catalytic activity.

It is found in the cytoplasm. It localises to the cytosol. The catalysed reaction is hydrogencarbonate + acetyl-CoA + ATP = malonyl-CoA + ADP + phosphate + H(+). It functions in the pathway lipid metabolism; malonyl-CoA biosynthesis; malonyl-CoA from acetyl-CoA: step 1/1. With respect to regulation, inhibited by phosphorylation. Citrate promotes oligomerization of the protein into filaments that correspond to the most active form of the carboxylase. Functionally, cytosolic enzyme that catalyzes the carboxylation of acetyl-CoA to malonyl-CoA, the first and rate-limiting step of de novo fatty acid biosynthesis. This is a 2 steps reaction starting with the ATP-dependent carboxylation of the biotin carried by the biotin carboxyl carrier (BCC) domain followed by the transfer of the carboxyl group from carboxylated biotin to acetyl-CoA. This chain is Acetyl-CoA carboxylase 1, found in Bos taurus (Bovine).